The sequence spans 51 residues: uncharacterized protein (51 aa).

Residues 1-24 form a disordered region; that stretch reads MGGRFSGRVGIEKGGHPPSAADHS.

This is an uncharacterized protein from Escherichia coli.